The primary structure comprises 307 residues: Thymidylate synthase (307 aa).

A dUMP-binding site is contributed by arginine 44. Serine 108 is modified (phosphoserine). DUMP is bound by residues 169–170, 189–190, 209–212, asparagine 220, and 250–252; these read RR, CH, RSGD, and HIY. Cysteine 189 (nucleophile) is an active-site residue. Aspartate 212 contributes to the (6R)-5,10-methylene-5,6,7,8-tetrahydrofolate binding site. Residues lysine 286 and lysine 302 each participate in a glycyl lysine isopeptide (Lys-Gly) (interchain with G-Cter in SUMO2) cross-link. Alanine 306 is a binding site for (6R)-5,10-methylene-5,6,7,8-tetrahydrofolate.

It belongs to the thymidylate synthase family. Homodimer.

Its subcellular location is the nucleus. The protein resides in the cytoplasm. The protein localises to the mitochondrion. It localises to the mitochondrion matrix. It is found in the mitochondrion inner membrane. It catalyses the reaction dUMP + (6R)-5,10-methylene-5,6,7,8-tetrahydrofolate = 7,8-dihydrofolate + dTMP. Its pathway is pyrimidine metabolism; dTTP biosynthesis. Functionally, catalyzes the reductive methylation of 2'-deoxyuridine 5'-monophosphate (dUMP) to thymidine 5'-monophosphate (dTMP), using the cosubstrate, 5,10- methylenetetrahydrofolate (CH2H4folate) as a 1-carbon donor and reductant and contributes to the de novo mitochondrial thymidylate biosynthesis pathway. The polypeptide is Thymidylate synthase (Tyms) (Mus musculus (Mouse)).